We begin with the raw amino-acid sequence, 292 residues long: Syntaxin-19 (292 aa).

The t-SNARE coiled-coil homology domain maps to 207–269 (LSEIEQRHKE…NNTKEKFGLA (63 aa)).

It belongs to the syntaxin family. In terms of assembly, interacts with EGFR. As to expression, expressed in stomach, lung and skin (at protein level). In stomach, strongly expressed in the mucosa of the fundus, in epithelial cells of gastric pits, and in gastric glands (at protein level). In skin, expressed in the epidermis, dermis, and epithelial layer of the hair bulb (at protein level).

It localises to the cell membrane. It is found in the cytoplasm. In terms of biological role, plays a role in endosomal trafficking of the epidermal growth factor receptor (EGFR). The chain is Syntaxin-19 from Mus musculus (Mouse).